A 195-amino-acid polypeptide reads, in one-letter code: Probable nicotinate-nucleotide adenylyltransferase (195 aa).

It belongs to the NadD family.

The enzyme catalyses nicotinate beta-D-ribonucleotide + ATP + H(+) = deamido-NAD(+) + diphosphate. It functions in the pathway cofactor biosynthesis; NAD(+) biosynthesis; deamido-NAD(+) from nicotinate D-ribonucleotide: step 1/1. Its function is as follows. Catalyzes the reversible adenylation of nicotinate mononucleotide (NaMN) to nicotinic acid adenine dinucleotide (NaAD). In Dictyoglomus thermophilum (strain ATCC 35947 / DSM 3960 / H-6-12), this protein is Probable nicotinate-nucleotide adenylyltransferase.